Reading from the N-terminus, the 165-residue chain is Small ribosomal subunit protein uS17c (165 aa).

Residues 1–57 (MSLSFSLLKPPLSSSNPNPFLHGTTTKLSLLPSFSALSLSSSPPSSSTTYTFPVIKA) constitute a chloroplast transit peptide. The tract at residues 128–165 (AVAPEGRQSSATRPKPIQAASDELGIPLESQVEGDKTV) is disordered.

Component of the chloroplast small ribosomal subunit (SSU). Mature 70S chloroplast ribosomes of higher plants consist of a small (30S) and a large (50S) subunit. The 30S small subunit contains 1 molecule of ribosomal RNA (16S rRNA) and 24 different proteins. The 50S large subunit contains 3 rRNA molecules (23S, 5S and 4.5S rRNA) and 33 different proteins.

It localises to the plastid. Its subcellular location is the chloroplast. Its function is as follows. Component of the chloroplast ribosome (chloro-ribosome), a dedicated translation machinery responsible for the synthesis of chloroplast genome-encoded proteins, including proteins of the transcription and translation machinery and components of the photosynthetic apparatus. The chain is Small ribosomal subunit protein uS17c (RPS17) from Spinacia oleracea (Spinach).